Here is a 686-residue protein sequence, read N- to C-terminus: Pentatricopeptide repeat-containing protein 1, mitochondrial (686 aa).

The segment covering 55-67 (RMSSLCSDSSTPV) has biased composition (polar residues). Positions 55–79 (RMSSLCSDSSTPVAPQEEEEEESFG) are disordered. PPR repeat units follow at residues 124-160 (TPYW…RLQP), 161-195 (LECN…DLEP), 196-234 (SDAT…NFQL), 235-269 (NLKT…GHAV), and 270-306 (TEET…GIKP). Residues 383-407 (KLEGPPAFPEARETSRTQPEVETKA) form a disordered region. Over residues 392 to 407 (EARETSRTQPEVETKA) the composition is skewed to basic and acidic residues. 2 PPR repeats span residues 508 to 542 (DITF…GIVP) and 575 to 609 (NTHI…SVPV).

Belongs to the PTCD1 family. Associates with mitochondrial leucine tRNAs. Interacts with ELAC2.

The protein localises to the mitochondrion matrix. Mitochondrial protein implicated in negative regulation of leucine tRNA levels, as well as negative regulation of mitochondria-encoded proteins and COX activity. Also affects the 3'-processing of mitochondrial tRNAs. In Rattus norvegicus (Rat), this protein is Pentatricopeptide repeat-containing protein 1, mitochondrial (Ptcd1).